Reading from the N-terminus, the 456-residue chain is GTPase Der (456 aa).

2 consecutive EngA-type G domains span residues 4 to 169 and 178 to 353; these read PVVA…PSKD and VQLA…DQSR. GTP is bound by residues 10 to 17, 57 to 61, 120 to 123, 184 to 191, 231 to 235, and 296 to 299; these read GRPNVGKS, DTGGL, NKCE, DTAGI, and NKWD. Residues 354–439 enclose the KH-like domain; the sequence is RRVTTSVVNE…PIKLFWRGKQ (86 aa).

This sequence belongs to the TRAFAC class TrmE-Era-EngA-EngB-Septin-like GTPase superfamily. EngA (Der) GTPase family. In terms of assembly, associates with the 50S ribosomal subunit.

Functionally, GTPase that plays an essential role in the late steps of ribosome biogenesis. The chain is GTPase Der from Prochlorococcus marinus (strain NATL1A).